The primary structure comprises 385 residues: 1-deoxy-D-xylulose 5-phosphate reductoisomerase (385 aa).

The NADPH site is built by Thr-10, Gly-11, Ser-12, Ile-13, Asn-38, and Asn-124. Lys-125 provides a ligand contact to 1-deoxy-D-xylulose 5-phosphate. An NADPH-binding site is contributed by Glu-126. Asp-150 provides a ligand contact to Mn(2+). Ser-151, Glu-152, Ser-176, and His-199 together coordinate 1-deoxy-D-xylulose 5-phosphate. Glu-152 contacts Mn(2+). Gly-205 lines the NADPH pocket. 1-deoxy-D-xylulose 5-phosphate contacts are provided by Ser-212, Asn-217, Lys-218, and Glu-221. A Mn(2+)-binding site is contributed by Glu-221.

This sequence belongs to the DXR family. It depends on Mg(2+) as a cofactor. Mn(2+) is required as a cofactor.

The enzyme catalyses 2-C-methyl-D-erythritol 4-phosphate + NADP(+) = 1-deoxy-D-xylulose 5-phosphate + NADPH + H(+). Its pathway is isoprenoid biosynthesis; isopentenyl diphosphate biosynthesis via DXP pathway; isopentenyl diphosphate from 1-deoxy-D-xylulose 5-phosphate: step 1/6. In terms of biological role, catalyzes the NADPH-dependent rearrangement and reduction of 1-deoxy-D-xylulose-5-phosphate (DXP) to 2-C-methyl-D-erythritol 4-phosphate (MEP). The sequence is that of 1-deoxy-D-xylulose 5-phosphate reductoisomerase from Clostridium acetobutylicum (strain ATCC 824 / DSM 792 / JCM 1419 / IAM 19013 / LMG 5710 / NBRC 13948 / NRRL B-527 / VKM B-1787 / 2291 / W).